Here is an 80-residue protein sequence, read N- to C-terminus: MFPLAKNALSRLRVQSIQQAVARQIHQKRAPDFHDKYGNAVLASGATFCVAVWVYMATQIGIEWNPSPVGRVTPKEWREQ.

Residues 1–24 constitute a mitochondrion transit peptide; it reads MFPLAKNALSRLRVQSIQQAVARQ. Over 25 to 32 the chain is Mitochondrial matrix; the sequence is IHQKRAPD. A helical transmembrane segment spans residues 33 to 59; sequence FHDKYGNAVLASGATFCVAVWVYMATQ. Residues 60–80 lie on the Mitochondrial intermembrane side of the membrane; it reads IGIEWNPSPVGRVTPKEWREQ.

This sequence belongs to the cytochrome c oxidase VIIb family. In terms of assembly, component of the cytochrome c oxidase (complex IV, CIV), a multisubunit enzyme composed of 14 subunits. The complex is composed of a catalytic core of 3 subunits MT-CO1, MT-CO2 and MT-CO3, encoded in the mitochondrial DNA, and 11 supernumerary subunits COX4I1 (or COX4I2), COX5A, COX5B, COX6A2 (or COX6A1), COX6B1 (or COX6B2), COX6C, COX7A1 (or COX7A2), COX7B, COX7C, COX8B and NDUFA4, which are encoded in the nuclear genome. The complex exists as a monomer or a dimer and forms supercomplexes (SCs) in the inner mitochondrial membrane with NADH-ubiquinone oxidoreductase (complex I, CI) and ubiquinol-cytochrome c oxidoreductase (cytochrome b-c1 complex, complex III, CIII), resulting in different assemblies (supercomplex SCI(1)III(2)IV(1) and megacomplex MCI(2)III(2)IV(2)).

Its subcellular location is the mitochondrion inner membrane. Its pathway is energy metabolism; oxidative phosphorylation. Component of the cytochrome c oxidase, the last enzyme in the mitochondrial electron transport chain which drives oxidative phosphorylation. The respiratory chain contains 3 multisubunit complexes succinate dehydrogenase (complex II, CII), ubiquinol-cytochrome c oxidoreductase (cytochrome b-c1 complex, complex III, CIII) and cytochrome c oxidase (complex IV, CIV), that cooperate to transfer electrons derived from NADH and succinate to molecular oxygen, creating an electrochemical gradient over the inner membrane that drives transmembrane transport and the ATP synthase. Cytochrome c oxidase is the component of the respiratory chain that catalyzes the reduction of oxygen to water. Electrons originating from reduced cytochrome c in the intermembrane space (IMS) are transferred via the dinuclear copper A center (CU(A)) of subunit 2 and heme A of subunit 1 to the active site in subunit 1, a binuclear center (BNC) formed by heme A3 and copper B (CU(B)). The BNC reduces molecular oxygen to 2 water molecules using 4 electrons from cytochrome c in the IMS and 4 protons from the mitochondrial matrix. Plays a role in proper central nervous system (CNS) development in vertebrates. The sequence is that of Cytochrome c oxidase subunit 7B, mitochondrial (COX7B) from Bos taurus (Bovine).